The primary structure comprises 622 residues: Prothrombin (622 aa).

An N-terminal signal peptide occupies residues 1–24 (MAHVRGLQLPGCLALAALCSLVHS). The propeptide occupies 25–43 (QHVFLAPQQARSLLQRVRR). The Gla domain maps to 44-89 (ANTFLEEVRKGNLERECVEETCSYEEAFEALESSTATDVFWAKYTA). 10 positions are modified to 4-carboxyglutamate: E49, E50, E57, E59, E62, E63, E68, E69, E72, and E75. A disulfide bridge connects residues C60 and C65. 11 disulfides stabilise this stretch: C90–C103, C108–C186, C129–C169, C157–C181, C213–C291, C234–C274, C262–C286, C336–C482, C391–C407, C536–C550, and C564–C594. 2 consecutive Kringle domains span residues 108–186 (CAEG…IPVC) and 213–291 (CVPD…LNYC). N121 and N143 each carry an N-linked (GlcNAc...) (complex) asparagine glycan. In terms of domain architecture, Peptidase S1 spans 364-618 (IVEGSDAEIG…LKKWIQKVID (255 aa)). The active-site Charge relay system is H406. N416 carries N-linked (GlcNAc...) (complex) asparagine glycosylation. The active-site Charge relay system is D462. The interval 551-573 (AGYKPDEGKRGDACEGDSGGPFV) is high affinity receptor-binding region which is also known as the TP508 peptide. The active-site Charge relay system is the S568.

The protein belongs to the peptidase S1 family. Heterodimer (named alpha-thrombin) of a light and a heavy chain; disulfide-linked. Forms a heterodimer with SERPINA5. In plasma, interacts (via N-terminus) with alpha-1-microglobulin with molar ratio 1:2 and 1:1; this interaction does not prevent the activation of prothrombin to thrombin. Interacts (thrombin) with iripin-8, a serine protease inhibitor from Ixodes ricinus saliva. Interacts (thrombin) with iripin-3, a serine protease inhibitor from Ixodes ricinus saliva. Interacts (thrombin) with Anopheles albimanus salivary thrombin inhibitor anophelin; the interaction results in thrombin inhibition. Interacts (thrombin) with Anopheles gambiae salivary thrombin inhibitor anophelin; the interaction results in thrombin inhibition. Interacts (thrombin) with Amblyomma variegatum variegin; the interaction results in thrombin inhibition. Interacts (thrombin) with Xenopsylla cheopis salivary thrombin inhibitor XC-42. Interacts (thrombin) with Xenopsylla cheopis salivary thrombin inhibitor XC-43. The gamma-carboxyglutamyl residues, which bind calcium ions, result from the carboxylation of glutamyl residues by a microsomal enzyme, the vitamin K-dependent carboxylase. The modified residues are necessary for the calcium-dependent interaction with a negatively charged phospholipid surface, which is essential for the conversion of prothrombin to thrombin. Post-translationally, N-glycosylated. N-glycan heterogeneity at Asn-121: Hex3HexNAc3 (minor), Hex4HexNAc3 (minor) and Hex5HexNAc4 (major). At Asn-143: Hex4HexNAc3 (minor) and Hex5HexNAc4 (major). In terms of processing, in the penultimate step of the coagulation cascade, prothrombin is converted to thrombin by the prothrombinase complex composed of factor Xa (F10), cofactor Va (F5), and phospholipids. This activation requires factor Xa-catalyzed sequential cleavage at 2 sites, Arg-314 and Arg-363, along 2 possible pathways. In the first pathway, the first cleavage occurs at Arg-314, leading to the formation of the inactive intermediate prethrombin-2. This pathway preferentially occurs on platelets and in the absence of cofactor Va. In the second pathway, the first cleavage occurs at Arg-363, which separates protease domain into 2 chains that remain connected through a disulfide bond and generates the active intermediate meizothrombin. The presence of cofactor Va directs activation along the meizothrombin pathway and greatly accelerates the rate of cleavage at Arg-363, but has a smaller effect on the cleavage of meizothrombin at Arg-314. Meizothrombin accumulates as an intermediate when prothrombinase is assembled on the membrane of red blood cells. In terms of tissue distribution, expressed by the liver and secreted in plasma.

It is found in the secreted. Its subcellular location is the extracellular space. It catalyses the reaction Selective cleavage of Arg-|-Gly bonds in fibrinogen to form fibrin and release fibrinopeptides A and B.. With respect to regulation, activity is promoted in the presence of negatively charged surfaces, such as polyphosphate and dextran sulfate. Inhibited by SERPINA5. Thrombin, which cleaves bonds after Arg and Lys, converts fibrinogen to fibrin and activates factors V, VII, VIII, XIII, and, in complex with thrombomodulin, protein C. Functions in blood homeostasis, inflammation and wound healing. Activates coagulation factor XI (F11); activation is promoted by the contact with negatively charged surfaces. Triggers the production of pro-inflammatory cytokines, such as MCP-1/CCL2 and IL8/CXCL8, in endothelial cells. The polypeptide is Prothrombin (F2) (Homo sapiens (Human)).